The chain runs to 274 residues: Thiamine kinase (274 aa).

Belongs to the thiamine kinase family.

The enzyme catalyses thiamine + ATP = thiamine phosphate + ADP + H(+). The protein operates within cofactor biosynthesis; thiamine diphosphate biosynthesis; thiamine phosphate from thiamine: step 1/1. Catalyzes the ATP-dependent phosphorylation of thiamine to thiamine phosphate. Is involved in thiamine salvage. This Shigella sonnei (strain Ss046) protein is Thiamine kinase.